The following is a 152-amino-acid chain: Snaclec anticoagulant protein subunit A (152 aa).

An N-terminal signal peptide occupies residues M1 to A23. Positions D24–A152 constitute a C-type lectin domain. 3 disulfide bridges follow: C25-C36, C53-C150, and C125-C142. Ca(2+)-binding residues include S64, E66, and E70. E151 serves as a coordination point for Ca(2+).

It belongs to the snaclec family. Heterodimer of subunits A and B; disulfide-linked. Expressed by the venom gland.

The protein resides in the secreted. Functionally, anticoagulant protein which binds to the gamma-carboxyglutamic acid-domain regions of factors IX and factor X in the presence of calcium with a 1 to 1 stoichiometry. Also inhibits platelet aggregation by binding to platelet glycoprotein Ibalpha (GP1BA) and functioning as a blocker of vWF. Is devoid of hemorrhagic and lethal activities. Possesses antithrombotic and thrombolytic activities. Also hydrolyzes the Aalpha-chain of fibrinogen. Does not affect the Bbeta-chain and the gamma chain. The sequence is that of Snaclec anticoagulant protein subunit A from Deinagkistrodon acutus (Hundred-pace snake).